A 123-amino-acid chain; its full sequence is Large ribosomal subunit protein uL14 (123 aa).

Belongs to the universal ribosomal protein uL14 family. Part of the 50S ribosomal subunit. Forms a cluster with proteins L3 and L19. In the 70S ribosome, L14 and L19 interact and together make contacts with the 16S rRNA in bridges B5 and B8.

Binds to 23S rRNA. Forms part of two intersubunit bridges in the 70S ribosome. The chain is Large ribosomal subunit protein uL14 from Yersinia pestis bv. Antiqua (strain Antiqua).